The sequence spans 261 residues: (R)-S-adenosyl-L-methionine hydrolase (261 aa).

Asp-12, Asp-72, and Asn-187 together coordinate adenosine. Residues Asn-187, Ser-231, and Val-239 each contribute to the (R)-S-adenosyl-L-methionine site. Val-239 contributes to the adenosine binding site.

This sequence belongs to the SAM hydrolase / SAM-dependent halogenase family.

It carries out the reaction (R)-S-adenosyl-L-methionine + H2O = adenosine + L-methionine + H(+). Its activity is regulated as follows. Activity is inhibited by chloride. Its function is as follows. Catalyzes the hydrolysis of S-adenosyl-L-methionine (SAM) into adenosine and L-methionine. Is likely stereoselective, specifically hydrolyzing (R)-S-adenosyl-L-methionine ((R)-SAM), the inactive form of the ubiquitous cofactor SAM, and not the active form of SAM, (S)-S-adenosyl-L-methionine. Probaly plays a role in preventing accumulation of (R)-S-adenosyl-L-methionine in cells; maintenance of (S)-S-denosyl-L-methionine homochirality is important for cellular health given that the (R)-form is largely inactive as a methyl donor and can function as an inhibitor of methyltransferases. Shows very slow iodinase activity in vitro. The polypeptide is (R)-S-adenosyl-L-methionine hydrolase (Salinispora arenicola (strain CNS-205)).